The sequence spans 176 residues: Lactoylglutathione lyase (176 aa).

One can recognise a VOC domain in the interval V23–A167. H26 serves as a coordination point for Ni(2+). Residue R30 participates in substrate binding. A Ni(2+)-binding site is contributed by E92. Residues N96, R114, and H118 each contribute to the substrate site. H118 and E163 together coordinate Ni(2+). E163 (proton donor/acceptor) is an active-site residue.

This sequence belongs to the glyoxalase I family. In terms of assembly, monomer. The cofactor is Ni(2+). It depends on Zn(2+) as a cofactor.

The catalysed reaction is (R)-S-lactoylglutathione = methylglyoxal + glutathione. It participates in secondary metabolite metabolism; methylglyoxal degradation; (R)-lactate from methylglyoxal: step 1/2. Catalyzes the conversion of hemimercaptal, formed from methylglyoxal and glutathione, to S-lactoylglutathione. The sequence is that of Lactoylglutathione lyase (gloA) from Pseudomonas aeruginosa (strain ATCC 15692 / DSM 22644 / CIP 104116 / JCM 14847 / LMG 12228 / 1C / PRS 101 / PAO1).